The chain runs to 256 residues: Thiazole synthase (256 aa).

Lys-95 (schiff-base intermediate with DXP) is an active-site residue. 1-deoxy-D-xylulose 5-phosphate contacts are provided by residues Gly-156, 182-183 (AG), and 204-205 (NT).

The protein belongs to the ThiG family. Homotetramer. Forms heterodimers with either ThiH or ThiS.

It is found in the cytoplasm. The enzyme catalyses [ThiS sulfur-carrier protein]-C-terminal-Gly-aminoethanethioate + 2-iminoacetate + 1-deoxy-D-xylulose 5-phosphate = [ThiS sulfur-carrier protein]-C-terminal Gly-Gly + 2-[(2R,5Z)-2-carboxy-4-methylthiazol-5(2H)-ylidene]ethyl phosphate + 2 H2O + H(+). It participates in cofactor biosynthesis; thiamine diphosphate biosynthesis. Its function is as follows. Catalyzes the rearrangement of 1-deoxy-D-xylulose 5-phosphate (DXP) to produce the thiazole phosphate moiety of thiamine. Sulfur is provided by the thiocarboxylate moiety of the carrier protein ThiS. In vitro, sulfur can be provided by H(2)S. The chain is Thiazole synthase from Escherichia coli O127:H6 (strain E2348/69 / EPEC).